The following is a 612-amino-acid chain: tRNA uridine 5-carboxymethylaminomethyl modification enzyme MnmG (612 aa).

9–14 (GAGHAG) provides a ligand contact to FAD. Position 270–284 (270–284 (GPLYCPSIEDKVFKF)) interacts with NAD(+).

It belongs to the MnmG family. In terms of assembly, homodimer. Heterotetramer of two MnmE and two MnmG subunits. FAD serves as cofactor.

It is found in the cytoplasm. In terms of biological role, NAD-binding protein involved in the addition of a carboxymethylaminomethyl (cmnm) group at the wobble position (U34) of certain tRNAs, forming tRNA-cmnm(5)s(2)U34. The protein is tRNA uridine 5-carboxymethylaminomethyl modification enzyme MnmG of Mycoplasma genitalium (strain ATCC 33530 / DSM 19775 / NCTC 10195 / G37) (Mycoplasmoides genitalium).